The following is a 135-amino-acid chain: ATP synthase epsilon chain (135 aa).

The protein belongs to the ATPase epsilon chain family. As to quaternary structure, F-type ATPases have 2 components, CF(1) - the catalytic core - and CF(0) - the membrane proton channel. CF(1) has five subunits: alpha(3), beta(3), gamma(1), delta(1), epsilon(1). CF(0) has three main subunits: a, b and c.

The protein localises to the cell inner membrane. In terms of biological role, produces ATP from ADP in the presence of a proton gradient across the membrane. The chain is ATP synthase epsilon chain from Bradyrhizobium sp. (strain ORS 278).